The following is a 124-amino-acid chain: Ribonuclease pancreatic (124 aa).

The segment at 1–23 (RESPAMKFQRQHMDSGNSPGNNP) is disordered. Residues lysine 7 and arginine 10 each contribute to the substrate site. Histidine 12 (proton acceptor) is an active-site residue. The span at 14–23 (DSGNSPGNNP) shows a compositional bias: polar residues. Intrachain disulfides connect cysteine 26/cysteine 84, cysteine 40/cysteine 95, cysteine 58/cysteine 110, and cysteine 65/cysteine 72. Residues 41-45 (KPVNT) and lysine 66 contribute to the substrate site. Residue asparagine 76 is glycosylated (N-linked (GlcNAc...) asparagine; partial). Residue arginine 85 participates in substrate binding. Histidine 119 functions as the Proton donor in the catalytic mechanism.

The protein belongs to the pancreatic ribonuclease family. As to quaternary structure, monomer. Interacts with and forms tight 1:1 complexes with RNH1. Dimerization of two such complexes may occur. Interaction with RNH1 inhibits this protein. In terms of tissue distribution, pancreas.

Its subcellular location is the secreted. It catalyses the reaction an [RNA] containing cytidine + H2O = an [RNA]-3'-cytidine-3'-phosphate + a 5'-hydroxy-ribonucleotide-3'-[RNA].. The enzyme catalyses an [RNA] containing uridine + H2O = an [RNA]-3'-uridine-3'-phosphate + a 5'-hydroxy-ribonucleotide-3'-[RNA].. Its function is as follows. Endonuclease that catalyzes the cleavage of RNA on the 3' side of pyrimidine nucleotides. Acts on single-stranded and double-stranded RNA. This is Ribonuclease pancreatic (RNASE1) from Balaenoptera acutorostrata (Common minke whale).